The sequence spans 321 residues: uncharacterized protein (321 aa).

It belongs to the NAD(P)-dependent epimerase/dehydratase family.

This is an uncharacterized protein from Staphylococcus aureus (strain COL).